We begin with the raw amino-acid sequence, 280 residues long: H-2 class II histocompatibility antigen gamma chain (280 aa).

At 1-30 the chain is on the cytoplasmic side; sequence MDDQRDLISNHEQLPILGQRARAPESNCNR. Position 9 is a phosphoserine (S9). A helical; Signal-anchor for type II membrane protein transmembrane segment spans residues 31–56; sequence GVLYTSVSVLVALLLAGQATTAYFLY. The Extracellular segment spans residues 57 to 280; sequence QQQGRLDKLT…TKQDMGQMFL (224 aa). N-linked (GlcNAc...) asparagine glycosylation is found at N114 and N120. Residues 194 to 255 enclose the Thyroglobulin type-1 domain; the sequence is LTKCQEEVSH…HTKSRGRHNC (62 aa). Disulfide bonds link C197–C216, C227–C234, and C236–C255. Residues 246 to 268 are disordered; the sequence is HTKSRGRHNCSEPLDMEDPSSGL. S266 carries O-linked (Xyl...) (chondroitin sulfate) serine glycosylation.

As to quaternary structure, nonamer composed of three alpha/beta/gamma heterotrimers. Interacts with CD44; this complex is essential for the MIF-induced signaling cascade that results in B cell survival. In terms of assembly, interacts with the mature form of CTSL; the complex survive in neutral pH environment.

Its subcellular location is the late endosome. The protein resides in the lysosome. The protein localises to the cell membrane. It localises to the endoplasmic reticulum membrane. It is found in the golgi apparatus. Its subcellular location is the trans-Golgi network. The protein resides in the endosome. The protein localises to the secreted. Functionally, plays a critical role in MHC class II antigen processing by stabilizing peptide-free class II alpha/beta heterodimers in a complex soon after their synthesis and directing transport of the complex from the endoplasmic reticulum to compartments where peptide loading of class II takes place. Enhance also the stimulation of T-cell responses through interaction with CD44. In terms of biological role, binds to the peptide-binding site of MHC class II alpha/beta heterodimers forming an alpha-beta-CLIP complex, thereby preventing the loading of antigenic peptides to the MHC class II complex until its release by HLA-DM in the endosome. Its function is as follows. Stabilizes the conformation of mature CTSL by binding to its active site and serving as a chaperone to help maintain a pool of mature enzyme in endocytic compartments and extracellular space of antigen-presenting cells (APCs). This is H-2 class II histocompatibility antigen gamma chain from Rattus norvegicus (Rat).